The chain runs to 160 residues: Class B acid phosphatase (160 aa).

A signal peptide spans 1–23; that stretch reads MRKVTLTLSAIALALSLNGAAMA. The Nucleophile role is filled by Asp69. Residues Asp69 and Asp71 each contribute to the Mg(2+) site. Asp71 acts as the Proton donor in catalysis. 137 to 138 is a substrate binding site; that stretch reads TG.

Belongs to the class B bacterial acid phosphatase family. As to quaternary structure, homotetramer. Requires Mg(2+) as cofactor.

The protein resides in the periplasm. It carries out the reaction a phosphate monoester + H2O = an alcohol + phosphate. Dephosphorylates several organic phosphate monoesters. Also has a phosphotransferase activity catalyzing the transfer of low-energy phosphate groups from organic phosphate monoesters to free hydroxyl groups of various organic compounds. This Proteus mirabilis protein is Class B acid phosphatase (aphA).